Reading from the N-terminus, the 335-residue chain is Atypical chemokine receptor 1 (335 aa).

Over 1 to 62 (MGNCLHPAEL…CNLLDDSALP (62 aa)) the chain is Extracellular. N-linked (GlcNAc...) asparagine glycans are attached at residues N16, N26, and N32. Cystine bridges form between C50–C275 and C128–C194. Residues 63-83 (FFILVSVLGILASGTVLFMFF) traverse the membrane as a helical segment. At 84 to 94 (RPLFHWQLCPG) the chain is on the cytoplasmic side. A helical transmembrane segment spans residues 95–115 (WPVLAQLAVGSALFSIVVPIL). Topologically, residues 116 to 128 (APGLGNTRSSALC) are extracellular. Residues 129–152 (SLGYCVWYGSAFAQALLLGCHASL) traverse the membrane as a helical segment. Over 153 to 165 (GPKLGAGQVPGLT) the chain is Cytoplasmic. The helical transmembrane segment at 166–186 (LGLSVGLWGVAALLTLPITLA) threads the bilayer. At 187 to 206 (SGASGGLCTPAYSMELKALQ) the chain is on the extracellular side. The helical transmembrane segment at 207-227 (ATHAVACLAVFVLLPLGLFGA) threads the bilayer. Residues 228-243 (KGLKKALGMGPGPWMN) are Cytoplasmic-facing. The chain crosses the membrane as a helical span at residues 244–264 (ILWAWFIFWWPHGVVLGLDFL). The Extracellular portion of the chain corresponds to 265 to 286 (VRSKLLLLSTCLAQQALDLLLN). A helical transmembrane segment spans residues 287–307 (LAEALAILHCVATPLLLALFC). The Cytoplasmic portion of the chain corresponds to 308 to 335 (HQATRTLLPSLPLPEGWSSHLDTLGSES).

The protein belongs to the G-protein coupled receptor 1 family. Atypical chemokine receptor subfamily. (Microbial infection) Interacts (via N-terminal extracellular domain) with Plasmodium knowlesi Duffy receptor alpha form (DBPalpha) (via region II).

Its subcellular location is the early endosome. The protein resides in the recycling endosome. The protein localises to the membrane. Functionally, atypical chemokine receptor that controls chemokine levels and localization via high-affinity chemokine binding that is uncoupled from classic ligand-driven signal transduction cascades, resulting instead in chemokine sequestration, degradation, or transcytosis. Also known as interceptor (internalizing receptor) or chemokine-scavenging receptor or chemokine decoy receptor. Has a promiscuous chemokine-binding profile, interacting with inflammatory chemokines of both the CXC and the CC subfamilies but not with homeostatic chemokines. Acts as a receptor for chemokines including CCL2, CCL5, CCL7, CCL11, CCL13, CCL14, CCL17, CXCL5, CXCL6, IL8/CXCL8, CXCL11, GRO, RANTES, MCP-1 and TARC. May regulate chemokine bioavailability and, consequently, leukocyte recruitment through two distinct mechanisms: when expressed in endothelial cells, it sustains the abluminal to luminal transcytosis of tissue-derived chemokines and their subsequent presentation to circulating leukocytes; when expressed in erythrocytes, serves as blood reservoir of cognate chemokines but also as a chemokine sink, buffering potential surges in plasma chemokine levels. In terms of biological role, (Microbial infection) Acts as a receptor for the malaria parasite Plasmodium knowlesi. In Macaca mulatta (Rhesus macaque), this protein is Atypical chemokine receptor 1 (ACKR1).